The chain runs to 63 residues: Megourin-1 (63 aa).

Monomer. Post-translationally, contains four disulfide bonds.

It localises to the secreted. Functionally, has antimicrobial activity against Gram-positive bacteria and fungi. The sequence is that of Megourin-1 from Megoura viciae (Vetch aphid).